The chain runs to 91 residues: Translation initiation factor IF-1 (91 aa).

In terms of domain architecture, S1-like spans 1–72; that stretch reads MAKEELLEFE…DRGRINFRHK (72 aa). The segment at 70-91 is disordered; the sequence is RHKAEGNAPPPGARRQQNFRRR.

It belongs to the IF-1 family. Component of the 30S ribosomal translation pre-initiation complex which assembles on the 30S ribosome in the order IF-2 and IF-3, IF-1 and N-formylmethionyl-tRNA(fMet); mRNA recruitment can occur at any time during PIC assembly.

It localises to the cytoplasm. Functionally, one of the essential components for the initiation of protein synthesis. Stabilizes the binding of IF-2 and IF-3 on the 30S subunit to which N-formylmethionyl-tRNA(fMet) subsequently binds. Helps modulate mRNA selection, yielding the 30S pre-initiation complex (PIC). Upon addition of the 50S ribosomal subunit IF-1, IF-2 and IF-3 are released leaving the mature 70S translation initiation complex. The sequence is that of Translation initiation factor IF-1 from Azorhizobium caulinodans (strain ATCC 43989 / DSM 5975 / JCM 20966 / LMG 6465 / NBRC 14845 / NCIMB 13405 / ORS 571).